The primary structure comprises 778 residues: NAD-dependent deacetylase sir2B (778 aa).

9 ANK repeats span residues 83–112 (LNWT…EISI), 114–142 (RYTA…VPNG), 148–178 (DMET…SMNS), 191–221 (HGVS…DINS), 225–255 (DNST…ELMN), 260–289 (YGNS…KIII), 317–354 (DGST…QVNG), 358–390 (GNAT…DPTI), and 394–423 (YGWT…LTNS). The tract at residues 438–458 (SSTSTSSSSSSSSSSSSSSSS) is disordered. Positions 465 to 778 (KEELKLKGIE…DYFNTLFNSF (314 aa)) constitute a Deacetylase sirtuin-type domain. Residue His-608 is the Proton acceptor of the active site. Residues Cys-616, Cys-619, Cys-642, and Cys-647 each coordinate Zn(2+). The tract at residues 727–746 (KLKQQQENESGESSNDNDNN) is disordered. The segment covering 733–746 (ENESGESSNDNDNN) has biased composition (low complexity).

It belongs to the sirtuin family. Zn(2+) is required as a cofactor.

The enzyme catalyses N(6)-acetyl-L-lysyl-[protein] + NAD(+) + H2O = 2''-O-acetyl-ADP-D-ribose + nicotinamide + L-lysyl-[protein]. Its function is as follows. NAD-dependent deacetylase, which plays an important role in the regulation of transcriptional repression. This chain is NAD-dependent deacetylase sir2B (sir2B), found in Dictyostelium discoideum (Social amoeba).